The following is a 121-amino-acid chain: Large ribosomal subunit protein bL21c (121 aa).

It belongs to the bacterial ribosomal protein bL21 family. In terms of assembly, part of the 50S ribosomal subunit.

It is found in the plastid. It localises to the chloroplast. Its function is as follows. This protein binds to 23S rRNA. This is Large ribosomal subunit protein bL21c from Huperzia lucidula (Shining clubmoss).